We begin with the raw amino-acid sequence, 364 residues long: Methylthioribose-1-phosphate isomerase (364 aa).

Asp254 (proton donor) is an active-site residue.

This sequence belongs to the eIF-2B alpha/beta/delta subunits family. MtnA subfamily.

The protein localises to the cytoplasm. The protein resides in the nucleus. The catalysed reaction is 5-(methylsulfanyl)-alpha-D-ribose 1-phosphate = 5-(methylsulfanyl)-D-ribulose 1-phosphate. The protein operates within amino-acid biosynthesis; L-methionine biosynthesis via salvage pathway; L-methionine from S-methyl-5-thio-alpha-D-ribose 1-phosphate: step 1/6. Functionally, catalyzes the interconversion of methylthioribose-1-phosphate (MTR-1-P) into methylthioribulose-1-phosphate (MTRu-1-P). The polypeptide is Methylthioribose-1-phosphate isomerase (Drosophila ananassae (Fruit fly)).